A 2347-amino-acid chain; its full sequence is Proto-oncogene tyrosine-protein kinase ROS (2347 aa).

An N-terminal signal peptide occupies residues 1–27 (MKNIYCLIPKLVNFATLGCLWISVVQC). The Extracellular segment spans residues 28 to 1859 (TVLNSCLKSC…LVGDDFWIPE (1832 aa)). Asn52, Asn114, and Asn123 each carry an N-linked (GlcNAc...) asparagine glycan. 2 consecutive Fibronectin type-III domains span residues 101 to 196 (LPTA…VPET) and 197 to 285 (APLI…SSSA). Residues Asn324, Asn352, Asn396, Asn471, Asn607, Asn628, Asn706, Asn714, Asn732, Asn939, Asn961, Asn1015, Asn1087, Asn1090, Asn1095, Asn1211, Asn1272, Asn1330, Asn1458, Asn1461, Asn1474, Asn1499, Asn1565, Asn1669, Asn1715, Asn1738, and Asn1808 are each glycosylated (N-linked (GlcNAc...) asparagine). The Fibronectin type-III 3 domain occupies 557 to 671 (LPGRPQELSV…EPSVGTTLVP (115 aa)). Fibronectin type-III domains follow at residues 947–1042 (IPDS…TVPS) and 1043–1150 (APEN…TSEI). Fibronectin type-III domains follow at residues 1450–1556 (DTVE…TKNG), 1557–1656 (VPEA…VEMF), 1658–1751 (TPEK…TKAG), and 1752–1854 (VPNK…VGDD). A helical membrane pass occupies residues 1860–1882 (TSFILTIIVGIFLVVTIPLTFVW). The Cytoplasmic segment spans residues 1883–2347 (HRRLKNQKSA…THSGYGDGSD (465 aa)). One can recognise a Protein kinase domain in the interval 1945–2222 (LTLRLLLGSG…DQLQLFRNFF (278 aa)). ATP contacts are provided by residues 1951–1959 (LGSGAFGEV) and Lys1980. Asp2079 functions as the Proton acceptor in the catalytic mechanism. Tyr2274 carries the phosphotyrosine; by autocatalysis modification. Residues 2284–2311 (GEEKSEGPLGSQESESCGLRKEEKEPHA) form a disordered region. The span at 2301–2311 (GLRKEEKEPHA) shows a compositional bias: basic and acidic residues. A Phosphotyrosine; by autocatalysis modification is found at Tyr2334.

Belongs to the protein kinase superfamily. Tyr protein kinase family. Insulin receptor subfamily. Interacts with PTPN6 (via SH2 1 domain); the interaction is direct and promotes ROS1 dephosphorylation. Interacts with PTPN11; may activate the PI3 kinase-mTOR signaling pathway. Interacts with VAV3; constitutive interaction mediating VAV3 phosphorylation. In terms of processing, phosphorylated. Probably autophosphorylates. Phosphorylation at Tyr-2274 is required for the interaction with PTPN6 that mediates ROS1 dephosphorylation. Phosphorylation at Tyr-2274 stimulates the kinase activity and the activation of the ERK1 signaling cascade. Phosphorylation at Tyr-2274 and/or Tyr-2334 recruits PTPN11. In terms of tissue distribution, expressed in brain. Expression is increased in primary gliomas.

The protein localises to the cell membrane. The catalysed reaction is L-tyrosyl-[protein] + ATP = O-phospho-L-tyrosyl-[protein] + ADP + H(+). With respect to regulation, inhibited by dephosphorylation by PTPN6. Its function is as follows. Receptor tyrosine kinase (RTK) that plays a role in epithelial cell differentiation and regionalization of the proximal epididymal epithelium. NELL2 is an endogenous ligand for ROS1. Upon endogenous stimulation by NELL2, ROS1 activates the intracellular signaling pathway and triggers epididymal epithelial differentiation and subsequent sperm maturation. May activate several downstream signaling pathways related to cell differentiation, proliferation, growth and survival including the PI3 kinase-mTOR signaling pathway. Mediates the phosphorylation of PTPN11, an activator of this pathway. May also phosphorylate and activate the transcription factor STAT3 to control anchorage-independent cell growth. Mediates the phosphorylation and the activation of VAV3, a guanine nucleotide exchange factor regulating cell morphology. May activate other downstream signaling proteins including AKT1, MAPK1, MAPK3, IRS1 and PLCG2. The polypeptide is Proto-oncogene tyrosine-protein kinase ROS (ROS1) (Homo sapiens (Human)).